The following is a 31-amino-acid chain: Cytochrome b6-f complex subunit 6 (31 aa).

A helical transmembrane segment spans residues 4–24 (LTSYFGFLLAALTITSVLFIG).

It belongs to the PetL family. The 4 large subunits of the cytochrome b6-f complex are cytochrome b6, subunit IV (17 kDa polypeptide, PetD), cytochrome f and the Rieske protein, while the 4 small subunits are PetG, PetL, PetM and PetN. The complex functions as a dimer.

The protein resides in the plastid. It localises to the chloroplast thylakoid membrane. Its function is as follows. Component of the cytochrome b6-f complex, which mediates electron transfer between photosystem II (PSII) and photosystem I (PSI), cyclic electron flow around PSI, and state transitions. PetL is important for photoautotrophic growth as well as for electron transfer efficiency and stability of the cytochrome b6-f complex. In Silene conica (Striped corn catchfly), this protein is Cytochrome b6-f complex subunit 6.